Consider the following 82-residue polypeptide: MVTIRLARHGAKKRPFYQVVVTDSRNARNGRFIERVGFFNPIASEKEEGTRLDLDRIAHWVGQGATISDRVAALIKEVKKAA.

It belongs to the bacterial ribosomal protein bS16 family.

The chain is Small ribosomal subunit protein bS16 from Salmonella agona (strain SL483).